The chain runs to 1028 residues: Beta-galactosidase (1028 aa).

Residues Asn-104 and Asp-203 each coordinate substrate. Residue Asp-203 participates in Na(+) binding. Glu-418, His-420, and Glu-463 together coordinate Mg(2+). Residues Glu-463 and 539–542 (EYAH) each bind substrate. Glu-463 (proton donor) is an active-site residue. Glu-539 serves as the catalytic Nucleophile. Asn-599 contacts Mg(2+). Residues Phe-603 and Asn-606 each contribute to the Na(+) site. Substrate contacts are provided by Asn-606 and Trp-1004.

Belongs to the glycosyl hydrolase 2 family. In terms of assembly, homotetramer. Mg(2+) serves as cofactor. Na(+) is required as a cofactor.

The enzyme catalyses Hydrolysis of terminal non-reducing beta-D-galactose residues in beta-D-galactosides.. The protein is Beta-galactosidase of Enterobacter sp. (strain 638).